Consider the following 195-residue polypeptide: Oocyte-secreted protein 3 (195 aa).

The N-terminal stretch at 1-21 (MKAFVASGLLLLIFGMWRCSG) is a signal peptide. Asn102 is a glycosylation site (N-linked (GlcNAc...) asparagine).

This sequence belongs to the PLAC1 family. As to expression, oocyte-specific.

The protein localises to the secreted. The chain is Oocyte-secreted protein 3 from Mus musculus (Mouse).